Reading from the N-terminus, the 241-residue chain is MEGVFTYLGGILGEDSHSAVLIAHLLLVAVIVIMIAKMATKSFRAVPNGTQNVMEAYLGGVVAMGKDVIGEELARKYLPLVAAVGLFIFVSNVIGIIPGFESPTSNINVTLPLALMVFVYYNYEGIKKHGVVHYFAHFAGPVKLLAPLMFPIEIVSHLSRIISLSFRLFGNIKGDDLFLWVLLMLVPFVAPLPAYLLLTFSALLQTFVFMILIYVYLAGAVAIDEEHEKAPAPAIDTMGAV.

The next 6 helical transmembrane spans lie at 19–39 (AVLI…AKMA), 80–100 (LVAA…IPGF), 106–126 (NINV…YEGI), 135–155 (FAHF…IEIV), 177–197 (LFLW…AYLL), and 203–223 (LLQT…AVAI).

It belongs to the ATPase A chain family. In terms of assembly, F-type ATPases have 2 components, CF(1) - the catalytic core - and CF(0) - the membrane proton channel. CF(1) has five subunits: alpha(3), beta(3), gamma(1), delta(1), epsilon(1). CF(0) has three main subunits: a(1), b(2) and c(9-12). The alpha and beta chains form an alternating ring which encloses part of the gamma chain. CF(1) is attached to CF(0) by a central stalk formed by the gamma and epsilon chains, while a peripheral stalk is formed by the delta and b chains.

Its subcellular location is the cell inner membrane. Its function is as follows. Key component of the proton channel; it plays a direct role in the translocation of protons across the membrane. The sequence is that of ATP synthase subunit a from Sulfurovum sp. (strain NBC37-1).